Consider the following 210-residue polypeptide: UPF0637 protein RBAM_014510 (210 aa).

Belongs to the UPF0637 family.

The sequence is that of UPF0637 protein RBAM_014510 from Bacillus velezensis (strain DSM 23117 / BGSC 10A6 / LMG 26770 / FZB42) (Bacillus amyloliquefaciens subsp. plantarum).